Reading from the N-terminus, the 369-residue chain is UDP-N-acetylglucosamine--N-acetylmuramyl-(pentapeptide) pyrophosphoryl-undecaprenol N-acetylglucosamine transferase (369 aa).

Residues 15–17 (TGG), Asn-126, Arg-169, Ser-197, and Gln-299 contribute to the UDP-N-acetyl-alpha-D-glucosamine site.

This sequence belongs to the glycosyltransferase 28 family. MurG subfamily.

It localises to the cell inner membrane. It carries out the reaction di-trans,octa-cis-undecaprenyl diphospho-N-acetyl-alpha-D-muramoyl-L-alanyl-D-glutamyl-meso-2,6-diaminopimeloyl-D-alanyl-D-alanine + UDP-N-acetyl-alpha-D-glucosamine = di-trans,octa-cis-undecaprenyl diphospho-[N-acetyl-alpha-D-glucosaminyl-(1-&gt;4)]-N-acetyl-alpha-D-muramoyl-L-alanyl-D-glutamyl-meso-2,6-diaminopimeloyl-D-alanyl-D-alanine + UDP + H(+). It participates in cell wall biogenesis; peptidoglycan biosynthesis. Functionally, cell wall formation. Catalyzes the transfer of a GlcNAc subunit on undecaprenyl-pyrophosphoryl-MurNAc-pentapeptide (lipid intermediate I) to form undecaprenyl-pyrophosphoryl-MurNAc-(pentapeptide)GlcNAc (lipid intermediate II). The protein is UDP-N-acetylglucosamine--N-acetylmuramyl-(pentapeptide) pyrophosphoryl-undecaprenol N-acetylglucosamine transferase of Methylobacterium radiotolerans (strain ATCC 27329 / DSM 1819 / JCM 2831 / NBRC 15690 / NCIMB 10815 / 0-1).